A 964-amino-acid chain; its full sequence is A-type ATP synthase subunit A (964 aa).

The 127-residue stretch at 392-518 folds into the DOD-type homing endonuclease domain; sequence FLGYLMANGT…LSYLFAKLGI (127 aa).

Belongs to the ATPase alpha/beta chains family. As to quaternary structure, has multiple subunits with at least A(3), B(3), C, D, E, F, H, I and proteolipid K(x). This protein undergoes a protein self splicing that involves a post-translational excision of the VDE intervening region (intein) followed by peptide ligation.

Its subcellular location is the cell membrane. The catalysed reaction is ATP + H2O + 4 H(+)(in) = ADP + phosphate + 5 H(+)(out). Functionally, component of the A-type ATP synthase that produces ATP from ADP in the presence of a proton gradient across the membrane. The A chain is the catalytic subunit. This chain is A-type ATP synthase subunit A, found in Pyrococcus horikoshii (strain ATCC 700860 / DSM 12428 / JCM 9974 / NBRC 100139 / OT-3).